The primary structure comprises 284 residues: 4-hydroxybenzoate octaprenyltransferase (284 aa).

The next 9 helical transmembrane spans lie at 19-39, 42-62, 85-105, 107-127, 134-154, 165-185, 211-231, 233-253, and 261-281; these read IPIL…SHGL, ISYL…GCII, GQLS…VAFI, VLFL…LAIL, FFAI…FMAF, AWIF…IYAL, ILLF…YCDF, SFFY…YFLY, and CINA…IAVI.

Belongs to the UbiA prenyltransferase family. Mg(2+) serves as cofactor.

The protein localises to the cell inner membrane. It carries out the reaction all-trans-octaprenyl diphosphate + 4-hydroxybenzoate = 4-hydroxy-3-(all-trans-octaprenyl)benzoate + diphosphate. It functions in the pathway cofactor biosynthesis; ubiquinone biosynthesis. Functionally, catalyzes the prenylation of para-hydroxybenzoate (PHB) with an all-trans polyprenyl group. Mediates the second step in the final reaction sequence of ubiquinone-8 (UQ-8) biosynthesis, which is the condensation of the polyisoprenoid side chain with PHB, generating the first membrane-bound Q intermediate 3-octaprenyl-4-hydroxybenzoate. The polypeptide is 4-hydroxybenzoate octaprenyltransferase (Francisella tularensis subsp. holarctica (strain LVS)).